Consider the following 856-residue polypeptide: Phosphoenolpyruvate synthase (856 aa).

The active-site Tele-phosphohistidine intermediate is the H433. 7 residues coordinate substrate: R523, R636, E738, G759, S760, N761, and D762. E738 is a Mg(2+) binding site. D762 contacts Mg(2+). C809 acts as the Proton donor in catalysis.

Belongs to the PEP-utilizing enzyme family. Requires Mg(2+) as cofactor.

The enzyme catalyses pyruvate + ATP + H2O = phosphoenolpyruvate + AMP + phosphate + 2 H(+). Its pathway is carbohydrate biosynthesis; gluconeogenesis. In terms of biological role, catalyzes the phosphorylation of pyruvate to phosphoenolpyruvate. This Aquifex aeolicus (strain VF5) protein is Phosphoenolpyruvate synthase (ppsA).